A 1317-amino-acid chain; its full sequence is Immunoglobulin superfamily member 1 (1317 aa).

The first 20 residues, 1–20 (MMLRTFTLLLLCIWLNPGMT), serve as a signal peptide directing secretion. Ig-like C2-type domains follow at residues 21 to 112 (SLAV…KILE), 114 to 211 (EAPG…KLVV), 216 to 302 (PKPT…SDIL), 311 to 398 (PKTW…ATYN), and 400 to 481 (VELM…HRSK). Residues 21–499 (SLAVESQPEL…GFLTWNSILN (479 aa)) are Extracellular-facing. A glycan (N-linked (GlcNAc...) asparagine) is linked at asparagine 43. The cysteines at positions 48 and 96 are disulfide-linked. Cysteine 238 and cysteine 286 form a disulfide bridge. 2 N-linked (GlcNAc...) asparagine glycosylation sites follow: asparagine 328 and asparagine 371. Disulfide bonds link cysteine 333–cysteine 382 and cysteine 422–cysteine 465. Residues 500–520 (EAVRVSLTMQLASLLLLVVWI) form a helical membrane-spanning segment. The Cytoplasmic segment spans residues 521 to 531 (RWKCRRLRLRE). A helical transmembrane segment spans residues 532 to 552 (AWLLGTAQGVAMLFILMALLC). Over 553-1317 (CGLCNGALTE…EVSVELTVPI (765 aa)) the chain is Extracellular. 7 consecutive Ig-like C2-type domains span residues 570-658 (TPKP…ALEL), 659-753 (VGTD…ELVI), 758-850 (PKPF…LVVT), 854-938 (PKPT…SSLS), 946-1041 (TDTF…ELIV), 1046-1131 (PKPS…NHSN), and 1142-1223 (PKPS…EPSD). A disulfide bridge connects residues cysteine 780 and cysteine 830. Asparagine 871 carries N-linked (GlcNAc...) asparagine glycosylation. Cysteine 876 and cysteine 923 are oxidised to a cystine. Residues asparagine 967 and asparagine 1063 are each glycosylated (N-linked (GlcNAc...) asparagine). 2 cysteine pairs are disulfide-bonded: cysteine 1068–cysteine 1115 and cysteine 1164–cysteine 1207. Residues 1290–1310 (NQEGEPGTTTNSPSSASQEVS) form a disordered region. A compositionally biased stretch (polar residues) spans 1296–1309 (GTTTNSPSSASQEV).

As to quaternary structure, interacts with INHA; the interaction is not confirmed by standard receptor binding assays. Interacts with ACVR1B; the interaction appears to be ligand-dependent as it is diminished by inhibin B and activin A. Interacts with ACVR2A, ACVR2B, ACVRL1 and BMPR1B. Interacts with HECTD1.

The protein localises to the membrane. The protein resides in the secreted. In terms of biological role, seems to be a coreceptor in inhibin signaling, but seems not to be a high-affinity inhibin receptor. Antagonizes activin A signaling in the presence or absence of inhibin B. Necessary to mediate a specific antagonistic effect of inhibin B on activin-stimulated transcription. This chain is Immunoglobulin superfamily member 1 (Igsf1), found in Mus musculus (Mouse).